Here is a 196-residue protein sequence, read N- to C-terminus: Holliday junction branch migration complex subunit RuvA (196 aa).

The domain I stretch occupies residues 1-63; it reads MYDYIKGKLS…DDAHLLFGFH (63 aa). Residues 64 to 142 are domain II; the sequence is TENEKEIFLN…EASGESATSR (79 aa). The interval 143–148 is flexible linker; it reads KVSSEQ. The segment at 148–196 is domain III; it reads QNSNLEEAMEALLALGYKATELKKVKAFFEGTNETVEQYIKSSLKMLMK.

Belongs to the RuvA family. Homotetramer. Forms an RuvA(8)-RuvB(12)-Holliday junction (HJ) complex. HJ DNA is sandwiched between 2 RuvA tetramers; dsDNA enters through RuvA and exits via RuvB. An RuvB hexamer assembles on each DNA strand where it exits the tetramer. Each RuvB hexamer is contacted by two RuvA subunits (via domain III) on 2 adjacent RuvB subunits; this complex drives branch migration. In the full resolvosome a probable DNA-RuvA(4)-RuvB(12)-RuvC(2) complex forms which resolves the HJ.

The protein localises to the cytoplasm. The RuvA-RuvB-RuvC complex processes Holliday junction (HJ) DNA during genetic recombination and DNA repair, while the RuvA-RuvB complex plays an important role in the rescue of blocked DNA replication forks via replication fork reversal (RFR). RuvA specifically binds to HJ cruciform DNA, conferring on it an open structure. The RuvB hexamer acts as an ATP-dependent pump, pulling dsDNA into and through the RuvAB complex. HJ branch migration allows RuvC to scan DNA until it finds its consensus sequence, where it cleaves and resolves the cruciform DNA. The sequence is that of Holliday junction branch migration complex subunit RuvA from Streptococcus agalactiae serotype III (strain NEM316).